The sequence spans 317 residues: Olfactory receptor 8B3 (317 aa).

Topologically, residues 1-32 (MISMLAGNGSSVTEFVLAGLTDRPELQLPLFY) are extracellular. Asn8 is a glycosylation site (N-linked (GlcNAc...) asparagine). A helical transmembrane segment spans residues 33 to 53 (LFLIIYIITVVGNLGLIILIG). The Cytoplasmic segment spans residues 54–59 (LNPHLH). A helical membrane pass occupies residues 60-80 (TPMYYFLFNLSFIDLCYSSVF). The Extracellular segment spans residues 81-97 (SPKMLINFVSEKNSISY). Residues 98–118 (AGCMTQLFLFLFFVISECYML) traverse the membrane as a helical segment. Residues 119-136 (TSMAYDRYVAICNPLLYK) are Cytoplasmic-facing. A helical transmembrane segment spans residues 137 to 157 (VTMSPQICSVISFAAYGMGFA). Residues 158–199 (GSSAHTGCMLRLTFCNVNVINHYLCDILPLLQLSCTSTYVNE) are Extracellular-facing. Residues 200–220 (VVVLIVVGINITVPSFTILIS) form a helical membrane-spanning segment. At 221-242 (YVFILANILNIKSTQGRAKAFS) the chain is on the cytoplasmic side. The helical transmembrane segment at 243–263 (TCSSHIMAISLFFGSAAFMYL) threads the bilayer. Topologically, residues 264-274 (KYSSGSMEQGK) are extracellular. The chain crosses the membrane as a helical span at residues 275–294 (ISSVFYTNVGPMLNPLIYSL). Residues 295 to 317 (RNKDVKVALRKSLIKFREKTDFN) lie on the Cytoplasmic side of the membrane.

This sequence belongs to the G-protein coupled receptor 1 family.

The protein resides in the cell membrane. Odorant receptor. This is Olfactory receptor 8B3 from Mus musculus (Mouse).